The chain runs to 305 residues: Glycine--tRNA ligase alpha subunit (305 aa).

This sequence belongs to the class-II aminoacyl-tRNA synthetase family. As to quaternary structure, tetramer of two alpha and two beta subunits.

It is found in the cytoplasm. The enzyme catalyses tRNA(Gly) + glycine + ATP = glycyl-tRNA(Gly) + AMP + diphosphate. This is Glycine--tRNA ligase alpha subunit from Streptococcus pneumoniae (strain ATCC 700669 / Spain 23F-1).